We begin with the raw amino-acid sequence, 1181 residues long: Integrin alpha-2 (1181 aa).

A signal peptide spans 1–29; it reads MGPERTGAAPLPLLLVLALSQGILNCCLA. The Extracellular portion of the chain corresponds to 30 to 1132; sequence YNVGLPEAKI…KPDEKAEVPT (1103 aa). 2 FG-GAP repeats span residues 34–92 and 101–161; these read LPEA…TATC and TSIP…LSAS. A disulfide bridge connects residues C83 and C92. N-linked (GlcNAc...) asparagine glycans are attached at residues N105, N112, and N343. The 178-residue stretch at 188–365 folds into the VWFA domain; it reads WDAVKNFLEK…TLGEQIFSIE (178 aa). FG-GAP repeat units lie at residues 366 to 420, 423 to 475, 477 to 539, 540 to 598, and 602 to 664; these read GTVQ…LIFP, AFDQ…ENGN, TVIQ…ILGQ, HQFL…TIRT, and QKIL…FTPE. N-linked (GlcNAc...) asparagine glycosylation is found at N432, N460, and N475. Positions 499, 501, 503, 507, 563, 565, 567, 571, 627, 629, 631, and 635 each coordinate Ca(2+). Cystine bridges form between C680–C737, C789–C795, C865–C876, C1019–C1050, and C1055–C1060. N699 carries N-linked (GlcNAc...) asparagine glycosylation. N-linked (GlcNAc...) asparagine glycosylation is found at N1057, N1074, and N1081. The chain crosses the membrane as a helical span at residues 1133-1154; sequence GVIIGSIIAGILLLLALVAILW. Residues 1155–1161 form an interaction with HPS5 region; sequence KLGFFKR. Over 1155 to 1181 the chain is Cytoplasmic; the sequence is KLGFFKRKYEKMTKNPDEIDETTELSS. Residues 1157-1161 carry the GFFKR motif motif; sequence GFFKR.

Belongs to the integrin alpha chain family. As to quaternary structure, heterodimer of an alpha and a beta subunit. Alpha-2 associates with beta-1. Interacts with HPS5 and RAB21. (Microbial infection) Integrin ITGA2:ITGB1 interacts (via ITAG2 I-domain) with rotavirus A VP4 protein. In terms of assembly, (Microbial infection) Integrin ITGA2:ITGB1 interacts with human echoviruses 1 and 8 capsid proteins.

The protein resides in the membrane. Integrin alpha-2/beta-1 is a receptor for laminin, collagen, collagen C-propeptides, fibronectin and E-cadherin. It recognizes the proline-hydroxylated sequence G-F-P-G-E-R in collagen. It is responsible for adhesion of platelets and other cells to collagens, modulation of collagen and collagenase gene expression, force generation and organization of newly synthesized extracellular matrix. In terms of biological role, (Microbial infection) Integrin ITGA2:ITGB1 acts as a receptor for Human rotavirus A. Its function is as follows. (Microbial infection) Integrin ITGA2:ITGB1 acts as a receptor for Human echoviruses 1 and 8. The protein is Integrin alpha-2 (ITGA2) of Homo sapiens (Human).